The sequence spans 518 residues: Chromosomal replication initiator protein DnaA (518 aa).

The interval 1-72 is domain I, interacts with DnaA modulators; it reads MNEFWQHCSA…DLARDFWHSP (72 aa). A domain II region spans residues 72–181; the sequence is PVDVQFVLDP…GESDSTYERS (110 aa). Residues 155–178 are disordered; that stretch reads AAARRTWRPGAAAQAAGGESDSTY. Residues 182–398 are domain III, AAA+ region; that stretch reads KLNPVLTFDN…GALRKILAYS (217 aa). ATP contacts are provided by Gly226, Gly228, Lys229, and Thr230. Residues 399-518 form a domain IV, binds dsDNA region; it reads KFHGREITIE…LHVLEQTLKG (120 aa).

Belongs to the DnaA family. As to quaternary structure, oligomerizes as a right-handed, spiral filament on DNA at oriC.

Its subcellular location is the cytoplasm. In terms of biological role, plays an essential role in the initiation and regulation of chromosomal replication. ATP-DnaA binds to the origin of replication (oriC) to initiate formation of the DNA replication initiation complex once per cell cycle. Binds the DnaA box (a 9 base pair repeat at the origin) and separates the double-stranded (ds)DNA. Forms a right-handed helical filament on oriC DNA; dsDNA binds to the exterior of the filament while single-stranded (ss)DNA is stabiized in the filament's interior. The ATP-DnaA-oriC complex binds and stabilizes one strand of the AT-rich DNA unwinding element (DUE), permitting loading of DNA polymerase. After initiation quickly degrades to an ADP-DnaA complex that is not apt for DNA replication. Binds acidic phospholipids. The sequence is that of Chromosomal replication initiator protein DnaA from Paraburkholderia phymatum (strain DSM 17167 / CIP 108236 / LMG 21445 / STM815) (Burkholderia phymatum).